The following is a 423-amino-acid chain: Mannose-6-phosphate isomerase (423 aa).

Position 2 is an N-acetylalanine (Ala2). Residues Ser102 and Ser108 each carry the phosphoserine modification. Residues Gln110, His112, Glu137, and His276 each contribute to the Zn(2+) site. Arg295 is an active-site residue.

It belongs to the mannose-6-phosphate isomerase type 1 family. Zn(2+) serves as cofactor.

The protein localises to the cytoplasm. The catalysed reaction is D-mannose 6-phosphate = D-fructose 6-phosphate. Its pathway is nucleotide-sugar biosynthesis; GDP-alpha-D-mannose biosynthesis; alpha-D-mannose 1-phosphate from D-fructose 6-phosphate: step 1/2. Isomerase that catalyzes the interconversion of fructose-6-P and mannose-6-P and has a critical role in the supply of D-mannose derivatives required for many eukaryotic glycosylation reactions. The protein is Mannose-6-phosphate isomerase of Rattus norvegicus (Rat).